The primary structure comprises 154 residues: Nascent polypeptide-associated complex subunit beta (154 aa).

Positions 34–99 (EQDDTKLIEA…PQEKDVTQLI (66 aa)) constitute an NAC-A/B domain. The segment at 125–154 (KNPELNAGGAEGAEEDIPDLIEGQKFDDVE) is disordered.

Belongs to the NAC-beta family. In terms of assembly, part of the nascent polypeptide-associated complex (NAC), consisting of EGD2 and EGD1. NAC associates with ribosomes via EGD1.

The protein localises to the cytoplasm. The protein resides in the nucleus. Its function is as follows. Component of the nascent polypeptide-associated complex (NAC), a dynamic component of the ribosomal exit tunnel, protecting the emerging polypeptides from interaction with other cytoplasmic proteins to ensure appropriate nascent protein targeting. The NAC complex also promotes mitochondrial protein import by enhancing productive ribosome interactions with the outer mitochondrial membrane and blocks the inappropriate interaction of ribosomes translating non-secretory nascent polypeptides with translocation sites in the membrane of the endoplasmic reticulum. EGD1 may act as a transcription factor that exert a negative effect on the expression of several genes that are transcribed by RNA polymerase II. This Debaryomyces hansenii (strain ATCC 36239 / CBS 767 / BCRC 21394 / JCM 1990 / NBRC 0083 / IGC 2968) (Yeast) protein is Nascent polypeptide-associated complex subunit beta (EGD1).